The sequence spans 220 residues: UPF0758 protein CKO_05095 (220 aa).

The MPN domain maps to 98-220; it reads ALLSPEMTRE…YVSFAERGWI (123 aa). Zn(2+)-binding residues include His169, His171, and Asp182. The JAMM motif motif lies at 169–182; it reads HNHPSGCAEPSKAD.

This sequence belongs to the UPF0758 family. YicR subfamily.

This is UPF0758 protein CKO_05095 from Citrobacter koseri (strain ATCC BAA-895 / CDC 4225-83 / SGSC4696).